The primary structure comprises 161 residues: NADH-quinone oxidoreductase subunit I (161 aa).

4Fe-4S ferredoxin-type domains lie at 52–82 (LRRYPNGEERCIACKLCEAICPAMAITIESE) and 92–121 (SRYDIDLTKCIFCGFCEEACPVDAVVETRV). Positions 62, 65, 68, 72, 101, 104, 107, and 111 each coordinate [4Fe-4S] cluster.

It belongs to the complex I 23 kDa subunit family. NDH-1 is composed of 14 different subunits. Subunits NuoA, H, J, K, L, M, N constitute the membrane sector of the complex. The cofactor is [4Fe-4S] cluster.

The protein localises to the cell inner membrane. It catalyses the reaction a quinone + NADH + 5 H(+)(in) = a quinol + NAD(+) + 4 H(+)(out). In terms of biological role, NDH-1 shuttles electrons from NADH, via FMN and iron-sulfur (Fe-S) centers, to quinones in the respiratory chain. The immediate electron acceptor for the enzyme in this species is believed to be ubiquinone. Couples the redox reaction to proton translocation (for every two electrons transferred, four hydrogen ions are translocated across the cytoplasmic membrane), and thus conserves the redox energy in a proton gradient. This is NADH-quinone oxidoreductase subunit I from Azoarcus sp. (strain BH72).